A 611-amino-acid chain; its full sequence is Oxidoreductase cicC (611 aa).

The signal sequence occupies residues 1-20 (MALRYLNKFSLLSLAVPTLA). FAD is bound by residues 45-46 (NA) and 65-66 (EA). Asn76 and Asn113 each carry an N-linked (GlcNAc...) asparagine glycan. Residues Val123 and 131-134 (NLMT) contribute to the FAD site. 3 N-linked (GlcNAc...) asparagine glycosylation sites follow: Asn282, Asn410, and Asn475. His547 serves as the catalytic Proton acceptor. Residue His547 is the Proton donor of the active site. An FAD-binding site is contributed by Ala581. The active-site Proton acceptor is the His591. 592 to 593 (PI) is a binding site for FAD.

It belongs to the GMC oxidoreductase family. The cofactor is FAD.

It functions in the pathway phytotoxin biosynthesis. In terms of biological role, oxidoreductase; part of the gene cluster that mediates the biosynthesis of cichorine, a phytotoxin active against knapweed, corn, and soybeans. The first step in the pathway is performed by the non-reducing polyketide synthase pkbA that condenses one acetyl-CoA starter unit with 3 malonyl-CoA units. PkbA also catalyzes one methylation step to produce 3-methylorsellinate. The nonribosomal peptide synthase-like protein cicB, the cytochrome P450 monooxygenase cicH and the O-methyltransferase cicE are involved in the conversion of 3-methylorsellinate into nidulol. CicB converts 3-methylorsellinate to a yet unidentified intermediate, cicH may play a ring-closing role for cichorine and cicE is plausibly responsible for the methylation of one of the phenol groups. The oxidoreductase cicC acts downstream with still unidentified enzymes to further convert nidulol into cichorine. In Emericella nidulans (strain FGSC A4 / ATCC 38163 / CBS 112.46 / NRRL 194 / M139) (Aspergillus nidulans), this protein is Oxidoreductase cicC.